The sequence spans 369 residues: Delta(6)-protoilludene synthase STEHIDRAFT_73029 (369 aa).

Mg(2+) is bound by residues D107, N243, S247, and E251. A D(D/E)XX(D/E) motif motif is present at residues 107 to 111; it reads DEYSD. The short motif at 243–251 is the NSE motif element; that stretch reads NDIVSYNLE. 2 residues coordinate (2E,6E)-farnesyl diphosphate: R333 and Y334.

This sequence belongs to the terpene synthase family. Mg(2+) serves as cofactor. Mn(2+) is required as a cofactor. It depends on Ca(2+) as a cofactor. The cofactor is Ni(2+). Requires Co(2+) as cofactor.

It catalyses the reaction (2E,6E)-farnesyl diphosphate = Delta(6)-protoilludene + diphosphate. The catalysed reaction is (2E,6E)-farnesyl diphosphate = alpha-selinene + diphosphate. Ca(2+) switches the cyclization mechanism of delta(6)-protoilludene synthase from 1,11 to 1,10 cyclization which leads to the production of beta-elemene. Functionally, terpene cyclase that catalyzes the cyclization of farnesyl diphosphate (FPP) to delta(6)-protoilludene. In presence of Ca(2+), a significant switch from 1,11 to a dual 1,11/1,10 cyclization occurs, producing beta-elemene as the major product, with lower levels of delta(6)-protoilludene and (E)-beta-caryophyllene, and traces of beta-selinene and alpha-selinene. The chain is Delta(6)-protoilludene synthase STEHIDRAFT_73029 from Stereum hirsutum (strain FP-91666) (White-rot fungus).